We begin with the raw amino-acid sequence, 509 residues long: Phosphoglycerate kinase, glycosomal (509 aa).

12 residues coordinate (2R)-3-phosphoglycerate: Val-32, Asp-33, Phe-34, Asn-35, Arg-48, Ser-70, His-71, Gly-73, Arg-74, Arg-224, His-260, and Arg-261. ADP is bound at residue Gly-306. Gly-306 contacts CDP. (2R)-3-phosphoglycerate is bound at residue Lys-308. Residue Lys-308 participates in AMP binding. Asp-311 lines the CDP pocket. Asp-311 contributes to the Mg(2+) binding site. Positions 312 and 330 each coordinate ADP. Lys-312 lines the AMP pocket. Position 312 (Lys-312) interacts with ATP. Gly-330 contributes to the CDP binding site. AMP is bound by residues Ala-331 and Ala-403. Residues Ala-331 and Ala-403 each contribute to the ATP site. Residues Ala-403 and Asn-427 each contribute to the ADP site. Residues Gly-428 and Phe-433 each coordinate CDP. Positions 433, 434, 466, and 467 each coordinate ADP. Residue Glu-434 coordinates AMP. Positions 434, 466, and 467 each coordinate ATP. Residue Asp-466 participates in Mg(2+) binding.

It belongs to the phosphoglycerate kinase family. Monomer. It depends on Mg(2+) as a cofactor.

The protein resides in the glycosome. The enzyme catalyses (2R)-3-phosphoglycerate + ATP = (2R)-3-phospho-glyceroyl phosphate + ADP. The protein operates within carbohydrate degradation; glycolysis; pyruvate from D-glyceraldehyde 3-phosphate: step 2/5. In Trypanosoma congolense, this protein is Phosphoglycerate kinase, glycosomal (56PGK).